The following is a 70-amino-acid chain: UPF0270 protein VS_2853 (70 aa).

Belongs to the UPF0270 family.

This Vibrio atlanticus (strain LGP32) (Vibrio splendidus (strain Mel32)) protein is UPF0270 protein VS_2853.